Consider the following 342-residue polypeptide: Holliday junction branch migration complex subunit RuvB (342 aa).

The tract at residues 1-181 (MENRMVTPFD…FGMLCAMEFY (181 aa)) is large ATPase domain (RuvB-L). Residues Leu20, Arg21, Gly62, Lys65, Thr66, Thr67, 128-130 (EDY), Arg171, Tyr181, and Arg218 contribute to the ATP site. Thr66 is a binding site for Mg(2+). Positions 182–252 (TDEELMEIVV…GAKAALDLLE (71 aa)) are small ATPAse domain (RuvB-S). The tract at residues 255 to 342 (KEGLDKIDNK…KDNQVSIFNK (88 aa)) is head domain (RuvB-H). DNA contacts are provided by Arg310 and Arg315.

The protein belongs to the RuvB family. In terms of assembly, homohexamer. Forms an RuvA(8)-RuvB(12)-Holliday junction (HJ) complex. HJ DNA is sandwiched between 2 RuvA tetramers; dsDNA enters through RuvA and exits via RuvB. An RuvB hexamer assembles on each DNA strand where it exits the tetramer. Each RuvB hexamer is contacted by two RuvA subunits (via domain III) on 2 adjacent RuvB subunits; this complex drives branch migration. In the full resolvosome a probable DNA-RuvA(4)-RuvB(12)-RuvC(2) complex forms which resolves the HJ.

It localises to the cytoplasm. The enzyme catalyses ATP + H2O = ADP + phosphate + H(+). The RuvA-RuvB-RuvC complex processes Holliday junction (HJ) DNA during genetic recombination and DNA repair, while the RuvA-RuvB complex plays an important role in the rescue of blocked DNA replication forks via replication fork reversal (RFR). RuvA specifically binds to HJ cruciform DNA, conferring on it an open structure. The RuvB hexamer acts as an ATP-dependent pump, pulling dsDNA into and through the RuvAB complex. RuvB forms 2 homohexamers on either side of HJ DNA bound by 1 or 2 RuvA tetramers; 4 subunits per hexamer contact DNA at a time. Coordinated motions by a converter formed by DNA-disengaged RuvB subunits stimulates ATP hydrolysis and nucleotide exchange. Immobilization of the converter enables RuvB to convert the ATP-contained energy into a lever motion, pulling 2 nucleotides of DNA out of the RuvA tetramer per ATP hydrolyzed, thus driving DNA branch migration. The RuvB motors rotate together with the DNA substrate, which together with the progressing nucleotide cycle form the mechanistic basis for DNA recombination by continuous HJ branch migration. Branch migration allows RuvC to scan DNA until it finds its consensus sequence, where it cleaves and resolves cruciform DNA. The chain is Holliday junction branch migration complex subunit RuvB from Clostridium botulinum (strain 657 / Type Ba4).